A 329-amino-acid chain; its full sequence is N-acetyl-gamma-glutamyl-phosphate reductase (329 aa).

Cysteine 155 is an active-site residue.

It belongs to the NAGSA dehydrogenase family. Type 1 subfamily.

The protein localises to the cytoplasm. It catalyses the reaction N-acetyl-L-glutamate 5-semialdehyde + phosphate + NADP(+) = N-acetyl-L-glutamyl 5-phosphate + NADPH + H(+). It functions in the pathway amino-acid biosynthesis; L-arginine biosynthesis; N(2)-acetyl-L-ornithine from L-glutamate: step 3/4. Its function is as follows. Catalyzes the NADPH-dependent reduction of N-acetyl-5-glutamyl phosphate to yield N-acetyl-L-glutamate 5-semialdehyde. In Shewanella pealeana (strain ATCC 700345 / ANG-SQ1), this protein is N-acetyl-gamma-glutamyl-phosphate reductase.